Consider the following 139-residue polypeptide: MRLTQGAFSFLPDLTDEQIVKQIQYAISKNWALNVEWTDDPHPRNAYWDLWGLPLFGIKDPAAVMFEINACRKAKPACYVKVNAFDNSRGVESCCLSFIVQRPTSNEPGFQLIRSEVDSRNIRYTIQSYASTRPEGERY.

The protein belongs to the RuBisCO small chain family. Heterohexadecamer of 8 large and 8 small subunits.

The protein resides in the plastid. It localises to the chloroplast. In terms of biological role, ruBisCO catalyzes two reactions: the carboxylation of D-ribulose 1,5-bisphosphate, the primary event in carbon dioxide fixation, as well as the oxidative fragmentation of the pentose substrate in the photorespiration process. Both reactions occur simultaneously and in competition at the same active site. Although the small subunit is not catalytic it is essential for maximal activity. This is Ribulose bisphosphate carboxylase small subunit from Guillardia theta (Cryptophyte).